The chain runs to 588 residues: Sulfite reductase [NADPH] hemoprotein beta-component (588 aa).

[4Fe-4S] cluster-binding residues include Cys443, Cys449, Cys488, and Cys492. Cys492 lines the siroheme pocket.

Belongs to the nitrite and sulfite reductase 4Fe-4S domain family. Alpha(8)-beta(8). The alpha component is a flavoprotein, the beta component is a hemoprotein. It depends on siroheme as a cofactor. [4Fe-4S] cluster is required as a cofactor.

The enzyme catalyses hydrogen sulfide + 3 NADP(+) + 3 H2O = sulfite + 3 NADPH + 4 H(+). Its pathway is sulfur metabolism; hydrogen sulfide biosynthesis; hydrogen sulfide from sulfite (NADPH route): step 1/1. Its function is as follows. Component of the sulfite reductase complex that catalyzes the 6-electron reduction of sulfite to sulfide. This is one of several activities required for the biosynthesis of L-cysteine from sulfate. This is Sulfite reductase [NADPH] hemoprotein beta-component from Actinobacillus succinogenes (strain ATCC 55618 / DSM 22257 / CCUG 43843 / 130Z).